Reading from the N-terminus, the 822-residue chain is Adhesion G protein-coupled receptor E2 (822 aa).

The first 18 residues, 1 to 18 (MGGRVFLAFCVWLTLLGA), serve as a signal peptide directing secretion. Residues 19 to 530 (ETQDSRDCAR…DVQEEDPVLT (512 aa)) are Extracellular-facing. One can recognise an EGF-like 1 domain in the interval 22–63 (DSRDCARWCPENSSCVNATACRCNPGFSSSSEIFTSPTEICD). Intrachain disulfides connect Cys-26–Cys-36, Cys-30–Cys-42, Cys-44–Cys-62, Cys-68–Cys-82, and Cys-76–Cys-91. Asn-33 and Asn-38 each carry an N-linked (GlcNAc...) asparagine glycan. The 40-residue stretch at 64–103 (DINECVPPSKVSCGKSSDCRNTEGSYDCVCNPGYELVSGA) folds into the EGF-like 1; calcium-binding domain. A glycan (N-linked (GlcNAc...) asparagine) is linked at Asn-108. Positions 116-159 (DVDECQQNPRLCKSYGTCVNTLGSFTCQCLPGFKFKPEDPKLCT) constitute an EGF-like 2; calcium-binding domain. Intrachain disulfides connect Cys-120-Cys-133, Cys-127-Cys-142, Cys-144-Cys-158, Cys-164-Cys-177, and Cys-171-Cys-186. An EGF-like 3; calcium-binding domain is found at 160 to 198 (DVNECTSGQNPCHSSTHCLNNVGSYQCRCRPGWQPIPGS). N-linked (GlcNAc...) asparagine glycosylation is found at Asn-203, Asn-222, Asn-351, Asn-371, Asn-427, Asn-449, and Asn-453. The EGF-like 4; calcium-binding domain occupies 209–247 (DVDECSSGLHQCDNSTVCFNTVGSYTCRCRPGWEPKHGI). 2 cysteine pairs are disulfide-bonded: Cys-213-Cys-226 and Cys-220-Cys-235. Residues 351–523 (NFSYPAGTEF…AVLMAPYDVQ (173 aa)) form the GAIN-B domain. 2 cysteine pairs are disulfide-bonded: Cys-475/Cys-505 and Cys-493/Cys-507. A GPS region spans residues 475–523 (CVFWEHGQNGCGHWATTGCSTMDTRDTSTICRCTHLSSFAVLMAPYDVQ). A helical transmembrane segment spans residues 531 to 551 (VITYMGLSLSLLCLLLAALTF). Over 552-562 (LLCKAIQNIST) the chain is Cytoplasmic. Residues 563 to 583 (SLHLQLSLCLLLAHLLFLVAI) traverse the membrane as a helical segment. Residues 584–589 (DRTEHE) lie on the Extracellular side of the membrane. A helical membrane pass occupies residues 590-610 (VLCAIIASALHYLYLAAFTWM). The Cytoplasmic portion of the chain corresponds to 611-637 (LLEALYLFLTARNLMVVNYSSINRFTK). A helical membrane pass occupies residues 638-658 (KLMFPVAYGVPAVTVAISAAS). At 659–676 (RPHLYGTPSRCWLQPEKG) the chain is on the extracellular side. Residues 677 to 697 (FIWGFLGPVCAIFSVNLALLL) traverse the membrane as a helical segment. Residues 698 to 728 (VTLWILKNRLSSLNNEVSTLQNTRMLAFKAT) lie on the Cytoplasmic side of the membrane. The helical transmembrane segment at 729–749 (AQLFILGCTWCLGILQVGPAA) threads the bilayer. Topologically, residues 750–753 (RVMA) are extracellular. Residues 754 to 774 (YLFTIINSLQGVFIFLVYCLL) traverse the membrane as a helical segment. At 775-822 (SQQVREQYRKWSKGFRKLRTESEMHTLSSSAKRDTPKPSTPGLLGLQS) the chain is on the cytoplasmic side. Positions 797–822 (EMHTLSSSAKRDTPKPSTPGLLGLQS) are disordered.

It belongs to the G-protein coupled receptor 2 family. Adhesion G-protein coupled receptor (ADGR) subfamily. As to quaternary structure, forms a heterodimer, consisting of a large extracellular region non-covalently linked to a seven-transmembrane moiety. Interacts with chondroitin sulfate; the interaction with chondroitin sulfate is calcium-dependent. Interacts with CD55. Autoproteolytically cleaved into 2 subunits, an extracellular alpha subunit and a seven-transmembrane beta subunit.

It localises to the cell membrane. The protein localises to the cell projection. Its subcellular location is the ruffle membrane. Cell surface receptor that binds to the chondroitin sulfate moiety of glycosaminoglycan chains and promotes cell attachment. Promotes granulocyte chemotaxis, degranulation and adhesion. In macrophages, promotes the release of inflammatory cytokines, including IL8 and TNF. Signals probably through G-proteins. The polypeptide is Adhesion G protein-coupled receptor E2 (ADGRE2) (Macaca mulatta (Rhesus macaque)).